A 137-amino-acid chain; its full sequence is Large-conductance mechanosensitive channel (137 aa).

A run of 2 helical transmembrane segments spans residues Phe-10–Gly-30 and Gly-76–Ile-96.

It belongs to the MscL family. In terms of assembly, homopentamer.

Its subcellular location is the cell inner membrane. In terms of biological role, channel that opens in response to stretch forces in the membrane lipid bilayer. May participate in the regulation of osmotic pressure changes within the cell. This chain is Large-conductance mechanosensitive channel, found in Pectobacterium carotovorum subsp. carotovorum (strain PC1).